A 188-amino-acid chain; its full sequence is dTTP/UTP pyrophosphatase (188 aa).

Residue D67 is the Proton acceptor of the active site.

Belongs to the Maf family. YhdE subfamily. It depends on a divalent metal cation as a cofactor.

It localises to the cytoplasm. It catalyses the reaction dTTP + H2O = dTMP + diphosphate + H(+). The enzyme catalyses UTP + H2O = UMP + diphosphate + H(+). In terms of biological role, nucleoside triphosphate pyrophosphatase that hydrolyzes dTTP and UTP. May have a dual role in cell division arrest and in preventing the incorporation of modified nucleotides into cellular nucleic acids. This is dTTP/UTP pyrophosphatase from Roseobacter denitrificans (strain ATCC 33942 / OCh 114) (Erythrobacter sp. (strain OCh 114)).